Here is an 802-residue protein sequence, read N- to C-terminus: Leucine--tRNA ligase (802 aa).

The 'HIGH' region signature appears at 40–51 (PYPSGAGLHVGH). Residues 576–580 (KMSKS) carry the 'KMSKS' region motif. An ATP-binding site is contributed by K579.

Belongs to the class-I aminoacyl-tRNA synthetase family.

The protein resides in the cytoplasm. The enzyme catalyses tRNA(Leu) + L-leucine + ATP = L-leucyl-tRNA(Leu) + AMP + diphosphate. The chain is Leucine--tRNA ligase from Bacillus cereus (strain ATCC 10987 / NRS 248).